Here is a 380-residue protein sequence, read N- to C-terminus: Cytochrome b (380 aa).

Transmembrane regions (helical) follow at residues 34–54 (FGSLLGICLLTQILTGLLLAT), 78–99 (WLIRNLHANGASFFFICIYLHI), 114–134 (WNTGIILLLALMATAFVGYVL), and 179–199 (FFALHFLLPFMIAGLAFIHLT). Positions 84 and 98 each coordinate heme b. Heme b contacts are provided by histidine 183 and histidine 197. Histidine 202 is an a ubiquinone binding site. A run of 4 helical transmembrane segments spans residues 227–247 (LKDILGFIVMFLPLTTLALFS), 289–309 (LGGVLALAASVLVLFLTPLLH), 321–341 (FSQFLFWTLVANLFILTWVGS), and 348–368 (FIIIGQLASLTYFTILLLLFP).

Belongs to the cytochrome b family. In terms of assembly, the cytochrome bc1 complex contains 11 subunits: 3 respiratory subunits (MT-CYB, CYC1 and UQCRFS1), 2 core proteins (UQCRC1 and UQCRC2) and 6 low-molecular weight proteins (UQCRH/QCR6, UQCRB/QCR7, UQCRQ/QCR8, UQCR10/QCR9, UQCR11/QCR10 and a cleavage product of UQCRFS1). This cytochrome bc1 complex then forms a dimer. Requires heme b as cofactor.

It localises to the mitochondrion inner membrane. In terms of biological role, component of the ubiquinol-cytochrome c reductase complex (complex III or cytochrome b-c1 complex) that is part of the mitochondrial respiratory chain. The b-c1 complex mediates electron transfer from ubiquinol to cytochrome c. Contributes to the generation of a proton gradient across the mitochondrial membrane that is then used for ATP synthesis. The chain is Cytochrome b (MT-CYB) from Alle alle (Dovekie).